Reading from the N-terminus, the 225-residue chain is Leucyl/phenylalanyl-tRNA--protein transferase (225 aa).

Belongs to the L/F-transferase family.

The protein localises to the cytoplasm. The enzyme catalyses N-terminal L-lysyl-[protein] + L-leucyl-tRNA(Leu) = N-terminal L-leucyl-L-lysyl-[protein] + tRNA(Leu) + H(+). It carries out the reaction N-terminal L-arginyl-[protein] + L-leucyl-tRNA(Leu) = N-terminal L-leucyl-L-arginyl-[protein] + tRNA(Leu) + H(+). The catalysed reaction is L-phenylalanyl-tRNA(Phe) + an N-terminal L-alpha-aminoacyl-[protein] = an N-terminal L-phenylalanyl-L-alpha-aminoacyl-[protein] + tRNA(Phe). In terms of biological role, functions in the N-end rule pathway of protein degradation where it conjugates Leu, Phe and, less efficiently, Met from aminoacyl-tRNAs to the N-termini of proteins containing an N-terminal arginine or lysine. This is Leucyl/phenylalanyl-tRNA--protein transferase from Gluconobacter oxydans (strain 621H) (Gluconobacter suboxydans).